The primary structure comprises 131 residues: Acidic leucine-rich nuclear phosphoprotein 32 family member D (131 aa).

LRR repeat units lie at residues 18 to 38 (DVKE…EGLT), 43 to 64 (ELEL…PKLN), 65 to 87 (KLKK…AEKC), 89 to 110 (NLIH…EPLK), and 114 to 131 (NLES…LNNY).

The protein belongs to the ANP32 family.

The protein is Acidic leucine-rich nuclear phosphoprotein 32 family member D (ANP32D) of Homo sapiens (Human).